The chain runs to 80 residues: uncharacterized protein (80 aa).

This is an uncharacterized protein from Acidianus sp. F28 (AFV-2).